The following is a 444-amino-acid chain: UPF0053 protein YhdP (444 aa).

The CNNM transmembrane domain occupies 1–201 (MDIVNLILVA…YKSGEINQSE (201 aa)). 3 helical membrane passes run 7–27 (ILVAVLIALTAFFVASEFAII), 61–81 (ACQLGITLTSIGLGVLGESTI), and 101–121 (VISFIFAYAIITFLHVVVGEL). CBS domains are found at residues 220–282 (MIPR…SVDS) and 284–344 (ISQF…IRDE).

This sequence belongs to the UPF0053 family.

It is found in the cell membrane. This Bacillus subtilis (strain 168) protein is UPF0053 protein YhdP (yhdP).